The following is a 428-amino-acid chain: Enolase (428 aa).

Gln-163 lines the (2R)-2-phosphoglycerate pocket. The Proton donor role is filled by Glu-205. Mg(2+)-binding residues include Asp-242, Glu-285, and Asp-312. Positions 337, 366, 367, and 388 each coordinate (2R)-2-phosphoglycerate. Residue Lys-337 is the Proton acceptor of the active site.

It belongs to the enolase family. It depends on Mg(2+) as a cofactor.

It localises to the cytoplasm. The protein resides in the secreted. Its subcellular location is the cell surface. The enzyme catalyses (2R)-2-phosphoglycerate = phosphoenolpyruvate + H2O. It functions in the pathway carbohydrate degradation; glycolysis; pyruvate from D-glyceraldehyde 3-phosphate: step 4/5. Functionally, catalyzes the reversible conversion of 2-phosphoglycerate (2-PG) into phosphoenolpyruvate (PEP). It is essential for the degradation of carbohydrates via glycolysis. The polypeptide is Enolase (Neisseria meningitidis serogroup C (strain 053442)).